The primary structure comprises 196 residues: UPF0301 protein BT_1078 (196 aa).

This sequence belongs to the UPF0301 (AlgH) family.

This chain is UPF0301 protein BT_1078, found in Bacteroides thetaiotaomicron (strain ATCC 29148 / DSM 2079 / JCM 5827 / CCUG 10774 / NCTC 10582 / VPI-5482 / E50).